A 553-amino-acid chain; its full sequence is Urocanate hydratase (553 aa).

Residues 45–46 (GG), Gln-123, 169–171 (GMG), Asp-189, Arg-194, 235–236 (NA), 256–260 (QTSAH), 266–267 (YV), Tyr-315, and Gly-485 each bind NAD(+).

The protein belongs to the urocanase family. It depends on NAD(+) as a cofactor.

The protein localises to the cytoplasm. It catalyses the reaction 4-imidazolone-5-propanoate = trans-urocanate + H2O. It functions in the pathway amino-acid degradation; L-histidine degradation into L-glutamate; N-formimidoyl-L-glutamate from L-histidine: step 2/3. Functionally, catalyzes the conversion of urocanate to 4-imidazolone-5-propionate. The polypeptide is Urocanate hydratase (Staphylococcus aureus (strain MRSA252)).